The primary structure comprises 261 residues: Receptor expression-enhancing protein 4 (261 aa).

A run of 2 helical transmembrane segments spans residues 1–21 and 35–55; these read MVSWIISRAVVLVFGLLYPAY and YVRWMMYWIVFALFMTVETFT. The disordered stretch occupies residues 167–261; sequence YTDALYPDEP…KKPAQSEPEN (95 aa). The span at 221-230 shows a compositional bias: polar residues; that stretch reads KSLQRSQSLR.

It belongs to the DP1 family. Interacts with microtubules. As to expression, during gastrulation, expressed on the dorsal side of the embryo and then in the neural plate and neural tube. At tailbud stages, expressed in the somites, neural tube and otic vesicle.

It localises to the endoplasmic reticulum membrane. Microtubule-binding protein required to ensure proper cell division and nuclear envelope reassembly by sequestering the endoplasmic reticulum away from chromosomes during mitosis. Probably acts by clearing the endoplasmic reticulum membrane from metaphase chromosomes. May play a role in the maintenance of both the nervous system and the musculature. This Xenopus laevis (African clawed frog) protein is Receptor expression-enhancing protein 4 (reep4).